The following is a 124-amino-acid chain: Glutaredoxin-2 (124 aa).

Cysteines 13 and 16 form a disulfide.

It belongs to the glutaredoxin family. In terms of assembly, homodimer.

The protein resides in the host cytoplasm. Glutaredoxin necessary for virion morphogenesis and virus replication. Functions as a thiol-disulfide transfer protein between membrane-associated OPG128 and substrates OPG095 or OPG053. The complete pathway for formation of disulfide bonds in intracellular virion membrane proteins sequentially involves oxidation of OPG072, OPG128 and OPG088. Exhibit thioltransferase and dehydroascorbate reductase activities in vitro. The sequence is that of Glutaredoxin-2 (OPG088) from Oryctolagus cuniculus (Rabbit).